The sequence spans 107 residues: Chlorobenzene dioxygenase, ferredoxin component (107 aa).

Positions 4-99 constitute a Rieske domain; the sequence is TYIMRQSDLP…IKVEGGDVHV (96 aa). C43, H45, C62, and H65 together coordinate [2Fe-2S] cluster.

It belongs to the bacterial ring-hydroxylating dioxygenase ferredoxin component family. In terms of assembly, this dioxygenase system consists of four proteins: the two subunits of the oxygenase component (TecA1 and TecA2), a ferredoxin (TecA3) and a ferredoxin reductase (TecA4). The cofactor is [2Fe-2S] cluster.

Its pathway is aromatic compound metabolism. In terms of biological role, part of the chlorobenzene dioxygenase system that catalyzes the dihydroxylation of a range of aromatic compounds, including chlorinated benzenes and toluenes, and dinuclear aromatics such as biphenyl and dibenzo-p-dioxin. This is Chlorobenzene dioxygenase, ferredoxin component from Cupriavidus sp. (strain PS12).